The chain runs to 144 residues: Mating factor alpha (144 aa).

The segment at residues 1 to 19 (MRFPSIFTAVLFAASSALA) is a signal peptide (or 20).

Functionally, the active factor is excreted into the culture medium by haploid cells of the alpha mating type and acts on cells of the opposite mating type (type A). It mediates the conjugation process between the two types by inhibiting the initiation of DNA synthesis in type a cells and synchronizing them with type alpha. In Saccharomyces uvarum (Yeast), this protein is Mating factor alpha.